Reading from the N-terminus, the 402-residue chain is UPF0261 protein BP1203 (402 aa).

This sequence belongs to the UPF0261 family.

The polypeptide is UPF0261 protein BP1203 (Bordetella pertussis (strain Tohama I / ATCC BAA-589 / NCTC 13251)).